Here is a 108-residue protein sequence, read N- to C-terminus: Parvalbumin beta (108 aa).

Residue Ala-1 is modified to N-acetylalanine. EF-hand domains are found at residues 38-73 and 77-108; these read KSNEELEAIFKILDQDKSGFIEDEELELFLQNFSAG and LTKTETETFLKAGDSDGDGKIGVDEFQKLVKA. Residues Asp-51, Asp-53, Ser-55, Phe-57, Glu-59, Glu-62, Asp-90, Asp-92, Asp-94, Lys-96, and Glu-101 each contribute to the Ca(2+) site.

This sequence belongs to the parvalbumin family.

In terms of biological role, in muscle, parvalbumin is thought to be involved in relaxation after contraction. It binds two calcium ions. The protein is Parvalbumin beta of Latimeria chalumnae (Coelacanth).